We begin with the raw amino-acid sequence, 43 residues long: uncharacterized protein (43 aa).

Residues 21–41 (SSFALIVVLFILLIIVGAAIF) form a helical membrane-spanning segment.

Belongs to the SscA family.

The protein resides in the membrane. This is an uncharacterized protein from Bacillus subtilis (strain 168).